The chain runs to 300 residues: Porphobilinogen deaminase (300 aa).

Residue Cys241 is modified to S-(dipyrrolylmethanemethyl)cysteine.

It belongs to the HMBS family. Monomer. Requires dipyrromethane as cofactor.

It carries out the reaction 4 porphobilinogen + H2O = hydroxymethylbilane + 4 NH4(+). The protein operates within porphyrin-containing compound metabolism; protoporphyrin-IX biosynthesis; coproporphyrinogen-III from 5-aminolevulinate: step 2/4. Tetrapolymerization of the monopyrrole PBG into the hydroxymethylbilane pre-uroporphyrinogen in several discrete steps. The polypeptide is Porphobilinogen deaminase (Sorangium cellulosum (strain So ce56) (Polyangium cellulosum (strain So ce56))).